The sequence spans 114 residues: Iron-sulfur cluster insertion protein ErpA (114 aa).

Iron-sulfur cluster is bound by residues Cys42, Cys106, and Cys108.

Belongs to the HesB/IscA family. As to quaternary structure, homodimer. The cofactor is iron-sulfur cluster.

Its function is as follows. Required for insertion of 4Fe-4S clusters for at least IspG. This Yersinia pseudotuberculosis serotype O:1b (strain IP 31758) protein is Iron-sulfur cluster insertion protein ErpA.